A 634-amino-acid polypeptide reads, in one-letter code: Probable potassium transport system protein Kup (634 aa).

Helical transmembrane passes span 19–39 (AIGL…TSPL), 62–82 (VLSL…VIFV), 113–133 (FVVV…MITP), 150–170 (GLEH…FLIQ), 177–197 (IGIL…ALGV), 225–245 (IGVA…ALYA), 259–279 (WFLL…ATIL), 291–311 (LLAP…ATVI), 349–369 (IYIG…VLGF), 379–399 (YGVA…VVIW), 406–426 (LWLG…FFAA), and 431–451 (VIQG…LMST).

This sequence belongs to the HAK/KUP transporter (TC 2.A.72) family.

It localises to the cell inner membrane. The enzyme catalyses K(+)(in) + H(+)(in) = K(+)(out) + H(+)(out). Transport of potassium into the cell. Likely operates as a K(+):H(+) symporter. In Pseudomonas aeruginosa (strain UCBPP-PA14), this protein is Probable potassium transport system protein Kup.